The sequence spans 389 residues: Putative RNA methyltransferase R405 (389 aa).

S-adenosyl-L-methionine contacts are provided by glutamine 207, aspartate 261, and aspartate 314. The active-site Nucleophile is the cysteine 342.

Belongs to the class I-like SAM-binding methyltransferase superfamily. RNA M5U methyltransferase family.

This chain is Putative RNA methyltransferase R405, found in Acanthamoeba polyphaga (Amoeba).